The primary structure comprises 806 residues: Glycerol-3-phosphate acyltransferase (806 aa).

The HXXXXD motif signature appears at 305-310; sequence CHRSHM.

The protein belongs to the GPAT/DAPAT family.

It is found in the cell inner membrane. The enzyme catalyses sn-glycerol 3-phosphate + an acyl-CoA = a 1-acyl-sn-glycero-3-phosphate + CoA. The protein operates within phospholipid metabolism; CDP-diacylglycerol biosynthesis; CDP-diacylglycerol from sn-glycerol 3-phosphate: step 1/3. The sequence is that of Glycerol-3-phosphate acyltransferase from Escherichia fergusonii (strain ATCC 35469 / DSM 13698 / CCUG 18766 / IAM 14443 / JCM 21226 / LMG 7866 / NBRC 102419 / NCTC 12128 / CDC 0568-73).